The following is a 361-amino-acid chain: Putative F-box protein At1g33010 (361 aa).

Residues 4–50 (GNTLDSIPTDLILEIFSRLSAKSVGRLRCLSKLWRKGEWFFFSSLQP) enclose the F-box domain. Positions 308-339 (SIRPTEQKHKPTSTETSMSRKDHQVRTIDQPQ) are disordered.

In Arabidopsis thaliana (Mouse-ear cress), this protein is Putative F-box protein At1g33010.